Consider the following 333-residue polypeptide: Adenosine deaminase (333 aa).

Residues His12 and His14 each coordinate Zn(2+). Residues His14, Asp16, and Gly170 each contribute to the substrate site. His197 contacts Zn(2+). Glu200 functions as the Proton donor in the catalytic mechanism. Position 278 (Asp278) interacts with Zn(2+). Asp279 provides a ligand contact to substrate.

This sequence belongs to the metallo-dependent hydrolases superfamily. Adenosine and AMP deaminases family. Adenosine deaminase subfamily. It depends on Zn(2+) as a cofactor.

It catalyses the reaction adenosine + H2O + H(+) = inosine + NH4(+). It carries out the reaction 2'-deoxyadenosine + H2O + H(+) = 2'-deoxyinosine + NH4(+). Catalyzes the hydrolytic deamination of adenosine and 2-deoxyadenosine. The polypeptide is Adenosine deaminase (Salmonella gallinarum (strain 287/91 / NCTC 13346)).